The following is a 202-amino-acid chain: MEPVKQIEGRAIPFGRKNVDTDVIIPARWLKTITRQGLGRGAFEALRADPDNIFDSAEFAGSPILIAGDNFGCGSSREHAAWALLDMGVKAVIAPSFSDIFSGNAFKNGILTVVLPQEAIDRLMEVAQTDPVSIDLEAQTVTTPFQDRFSFEIDPFRKHCLANGLDEVGLTMARGDAIATHEARMRESLPFLAKGTDAVAAA.

This sequence belongs to the LeuD family. LeuD type 1 subfamily. In terms of assembly, heterodimer of LeuC and LeuD.

The enzyme catalyses (2R,3S)-3-isopropylmalate = (2S)-2-isopropylmalate. Its pathway is amino-acid biosynthesis; L-leucine biosynthesis; L-leucine from 3-methyl-2-oxobutanoate: step 2/4. Its function is as follows. Catalyzes the isomerization between 2-isopropylmalate and 3-isopropylmalate, via the formation of 2-isopropylmaleate. In Novosphingobium aromaticivorans (strain ATCC 700278 / DSM 12444 / CCUG 56034 / CIP 105152 / NBRC 16084 / F199), this protein is 3-isopropylmalate dehydratase small subunit.